We begin with the raw amino-acid sequence, 529 residues long: Delayed-rectifier potassium channel regulatory subunit KCNS1 (529 aa).

Topologically, residues 1–217 (MLMLLVRGTH…LTMENPGYSL (217 aa)) are cytoplasmic. A helical transmembrane segment spans residues 218 to 239 (PSKLFSCVSISVVLASIAAMCI). At 240 to 270 (HSLPEYQAREAAAAVAAVAAGRSPEGVRDDP) the chain is on the extracellular side. The chain crosses the membrane as a helical span at residues 271-293 (VLRRLEYFCIAWFSFEVSSRLLL). Residues 294–304 (APSTRNFFCHP) lie on the Cytoplasmic side of the membrane. Residues 305–322 (LNLIDIVSVLPFYLTLLA) form a helical membrane-spanning segment. Residues 323 to 340 (GVALGDQGGTGGKELGHL) are Extracellular-facing. The helical; Voltage-sensor transmembrane segment at 341–361 (GKVVQVFRLMRIFRVLKLARH) threads the bilayer. Topologically, residues 362-376 (STGLRSLGATLKHSY) are cytoplasmic. The helical transmembrane segment at 377-398 (REVGILLLYLAVGVSVFSGVAY) threads the bilayer. Topologically, residues 399–411 (TAEKEEDVGFNTI) are extracellular. The helical intramembrane region spans 412–423 (PACWWWGTVSMT). The Selectivity filter signature appears at 424–429 (TVGYGD). An intramembrane segment occupies 424-431 (TVGYGDVV). Residues 432-438 (PVTVAGK) are Extracellular-facing. Residues 439–467 (LAASGCILGGILVVALPITIIFNKFSHFY) form a helical membrane-spanning segment. Over 468-529 (RRQKALEAAV…PSEPPHPQMY (62 aa)) the chain is Cytoplasmic. Positions 496-529 (SEASLETSRETSQEGRSADLETQAPSEPPHPQMY) are disordered. Basic and acidic residues predominate over residues 502–514 (TSRETSQEGRSAD).

Belongs to the potassium channel family. S (TC 1.A.1.2) subfamily. Kv9.1/KCNS1 sub-subfamily. Heterotetramer with KCNB1. Heterotetramer with KCNB2. Does not form homomultimers.

The protein localises to the cell membrane. Its function is as follows. Potassium channel regulatory subunit that modulate the delayed rectifier voltage-gated potassium channel activity of KCNB1 and KCNB2 by altering their kinetics, expression levels, and shifting the half-inactivation potential to more polarized values. While it does not form functional channels on its own, it can form functional heterotetrameric channels with KCNB1 and KCNB2. Each regulatory subunit has unique regulatory properties that can lead to extensive inhibition, significant changes in kinetics, and/or substantial shifts in the voltage dependencies of the inactivation process. In Papio anubis (Olive baboon), this protein is Delayed-rectifier potassium channel regulatory subunit KCNS1.